Consider the following 263-residue polypeptide: tRNA (guanine-N(7)-)-methyltransferase (263 aa).

A compositionally biased stretch (polar residues) spans M1–P10. Positions M1–H38 are disordered. Residues E91, E116, D143, and D166 each contribute to the S-adenosyl-L-methionine site. Residue D166 is part of the active site. K170 lines the substrate pocket. Residues R172 to R177 are interaction with RNA. Substrate is bound by residues D202 and T240–E243.

It belongs to the class I-like SAM-binding methyltransferase superfamily. TrmB family.

It catalyses the reaction guanosine(46) in tRNA + S-adenosyl-L-methionine = N(7)-methylguanosine(46) in tRNA + S-adenosyl-L-homocysteine. The protein operates within tRNA modification; N(7)-methylguanine-tRNA biosynthesis. Functionally, catalyzes the formation of N(7)-methylguanine at position 46 (m7G46) in tRNA. This Cupriavidus necator (strain ATCC 17699 / DSM 428 / KCTC 22496 / NCIMB 10442 / H16 / Stanier 337) (Ralstonia eutropha) protein is tRNA (guanine-N(7)-)-methyltransferase.